The chain runs to 331 residues: 6-phosphogluconolactonase (331 aa).

The protein belongs to the cycloisomerase 2 family.

It catalyses the reaction 6-phospho-D-glucono-1,5-lactone + H2O = 6-phospho-D-gluconate + H(+). It participates in carbohydrate degradation; pentose phosphate pathway; D-ribulose 5-phosphate from D-glucose 6-phosphate (oxidative stage): step 2/3. Catalyzes the hydrolysis of 6-phosphogluconolactone to 6-phosphogluconate. The protein is 6-phosphogluconolactonase of Serratia proteamaculans (strain 568).